We begin with the raw amino-acid sequence, 609 residues long: Alpha-fetoprotein (609 aa).

A signal peptide spans 1 to 18 (MKWVESIFLIFLLNFTES). Albumin domains lie at 19 to 210 (RTLH…ATVT), 211 to 402 (KELR…EELQ), and 403 to 601 (KYIQ…KLIS). His-22 is a Cu(2+) binding site. Intrachain disulfides connect Cys-99-Cys-114, Cys-113-Cys-124, Cys-148-Cys-193, Cys-192-Cys-201, Cys-224-Cys-270, Cys-269-Cys-277, Cys-289-Cys-303, and Cys-302-Cys-313. Phosphoserine; by FAM20C occurs at positions 111, 115, and 117. The N-linked (GlcNAc...) asparagine glycan is linked to Asn-251. Ser-344 bears the Phosphoserine; by FAM20C mark. Disulfide bonds link Cys-384/Cys-393, Cys-416/Cys-462, Cys-461/Cys-472, Cys-485/Cys-501, Cys-500/Cys-511, Cys-538/Cys-583, and Cys-582/Cys-591. Residues Ser-444 and Ser-445 each carry the phosphoserine; by FAM20C modification.

It belongs to the ALB/AFP/VDB family. As to quaternary structure, dimeric and trimeric forms have been found in addition to the monomeric form. In terms of processing, independent studies suggest heterogeneity of the N-terminal sequence of the mature protein and of the cleavage site of the signal sequence. Sulfated. As to expression, plasma. Synthesized by the fetal liver and yolk sac.

It is found in the secreted. Functionally, binds copper, nickel, and fatty acids as well as, and bilirubin less well than, serum albumin. Only a small percentage (less than 2%) of the human AFP shows estrogen-binding properties. The polypeptide is Alpha-fetoprotein (AFP) (Homo sapiens (Human)).